We begin with the raw amino-acid sequence, 109 residues long: SIAFSRAVFSEFLATLLFVFFGLGSALNWPQALPSVLQIAMAFGLAIGTLVQALGHISGAHINPAVTVACLVGCHVSFLRATFYLAAQLLGAVAGAAILHEITPPDIRG.

At 1 to 6 (SIAFSR) the chain is on the cytoplasmic side. Residues 7–27 (AVFSEFLATLLFVFFGLGSAL) traverse the membrane as a helical segment. Topologically, residues 28–35 (NWPQALPS) are extracellular. A helical membrane pass occupies residues 36 to 54 (VLQIAMAFGLAIGTLVQAL). Topologically, residues 55–59 (GHISG) are cytoplasmic. Residues 60-69 (AHINPAVTVA) constitute an intramembrane region (discontinuously helical). Residues 63 to 65 (NPA) carry the NPA 1 motif. The Cytoplasmic portion of the chain corresponds to 70 to 80 (CLVGCHVSFLR). A helical membrane pass occupies residues 81–102 (ATFYLAAQLLGAVAGAAILHEI). Over 103 to 109 (TPPDIRG) the chain is Extracellular.

Belongs to the MIP/aquaporin (TC 1.A.8) family. As to quaternary structure, homotetramer. In terms of processing, serine phosphorylation is necessary and sufficient for expression at the apical membrane. Endocytosis is not phosphorylation-dependent. N-glycosylated.

The protein resides in the apical cell membrane. Its subcellular location is the basolateral cell membrane. It is found in the cell membrane. It localises to the cytoplasmic vesicle membrane. The protein localises to the golgi apparatus. The protein resides in the trans-Golgi network membrane. The enzyme catalyses H2O(in) = H2O(out). It catalyses the reaction glycerol(in) = glycerol(out). Forms a water-specific channel that provides the plasma membranes of renal collecting duct with high permeability to water, thereby permitting water to move in the direction of an osmotic gradient. Plays an essential role in renal water homeostasis. Could also be permeable to glycerol. The sequence is that of Aquaporin-2 from Dugong dugon (Dugong).